The following is a 185-amino-acid chain: Alkyl hydroperoxide reductase AhpD (185 aa).

Cysteine 132 (proton donor) is an active-site residue. Residues cysteine 132 and cysteine 135 are joined by a disulfide bond. Residue cysteine 135 is the Cysteine sulfenic acid (-SOH) intermediate of the active site.

The protein belongs to the AhpD family.

It catalyses the reaction N(6)-[(R)-dihydrolipoyl]-L-lysyl-[lipoyl-carrier protein] + a hydroperoxide = N(6)-[(R)-lipoyl]-L-lysyl-[lipoyl-carrier protein] + an alcohol + H2O. Antioxidant protein with alkyl hydroperoxidase activity. Required for the reduction of the AhpC active site cysteine residues and for the regeneration of the AhpC enzyme activity. The protein is Alkyl hydroperoxide reductase AhpD of Anaeromyxobacter sp. (strain Fw109-5).